Reading from the N-terminus, the 219-residue chain is 23.6 kDa heat shock protein, mitochondrial (219 aa).

The N-terminal 29 residues, 1-29 (MALARQCLSKRLAAGCALARPLHAASPVA), are a transit peptide targeting the mitochondrion. The sHSP domain maps to 104–219 (QVAETLTRPL…KRSVTEVKVR (116 aa)).

This sequence belongs to the small heat shock protein (HSP20) family. As to quaternary structure, may form oligomeric structures.

It is found in the mitochondrion. The chain is 23.6 kDa heat shock protein, mitochondrial (HSP23.6) from Oryza sativa subsp. japonica (Rice).